A 73-amino-acid chain; its full sequence is Translation initiation factor IF-1 (73 aa).

Positions 1–73 (MSKKKDVIEM…TRGRITYRYK (73 aa)) constitute an S1-like domain.

This sequence belongs to the IF-1 family. In terms of assembly, component of the 30S ribosomal translation pre-initiation complex which assembles on the 30S ribosome in the order IF-2 and IF-3, IF-1 and N-formylmethionyl-tRNA(fMet); mRNA recruitment can occur at any time during PIC assembly.

The protein resides in the cytoplasm. Functionally, one of the essential components for the initiation of protein synthesis. Stabilizes the binding of IF-2 and IF-3 on the 30S subunit to which N-formylmethionyl-tRNA(fMet) subsequently binds. Helps modulate mRNA selection, yielding the 30S pre-initiation complex (PIC). Upon addition of the 50S ribosomal subunit IF-1, IF-2 and IF-3 are released leaving the mature 70S translation initiation complex. The chain is Translation initiation factor IF-1 from Chloroflexus aurantiacus (strain ATCC 29366 / DSM 635 / J-10-fl).